Consider the following 422-residue polypeptide: UDP-N-acetylglucosamine 1-carboxyvinyltransferase (422 aa).

22–23 lines the phosphoenolpyruvate pocket; the sequence is KN. Arginine 93 contributes to the UDP-N-acetyl-alpha-D-glucosamine binding site. Cysteine 117 functions as the Proton donor in the catalytic mechanism. Cysteine 117 carries the post-translational modification 2-(S-cysteinyl)pyruvic acid O-phosphothioketal. Residues 122 to 126, aspartate 308, and leucine 330 each bind UDP-N-acetyl-alpha-D-glucosamine; that span reads RPVDL.

The protein belongs to the EPSP synthase family. MurA subfamily.

The protein localises to the cytoplasm. The enzyme catalyses phosphoenolpyruvate + UDP-N-acetyl-alpha-D-glucosamine = UDP-N-acetyl-3-O-(1-carboxyvinyl)-alpha-D-glucosamine + phosphate. It functions in the pathway cell wall biogenesis; peptidoglycan biosynthesis. In terms of biological role, cell wall formation. Adds enolpyruvyl to UDP-N-acetylglucosamine. The protein is UDP-N-acetylglucosamine 1-carboxyvinyltransferase of Helicobacter pylori (strain J99 / ATCC 700824) (Campylobacter pylori J99).